Here is a 197-residue protein sequence, read N- to C-terminus: Sodium/potassium-transporting ATPase subunit beta-1-interacting protein 3 (197 aa).

A run of 4 helical transmembrane segments spans residues 2–22 (GCCTGRCSLICLCALQLVSAL), 35–55 (APILGNFLHIIVVILGLFGTI), 62–82 (IMVYTVWTALWVTWNVFIICF), and 152–172 (VQILLSLVGFVYACYVISISM).

The protein belongs to the NKAIN family. Interacts with ATP1B1.

It is found in the cell membrane. This Homo sapiens (Human) protein is Sodium/potassium-transporting ATPase subunit beta-1-interacting protein 3 (NKAIN3).